A 277-amino-acid chain; its full sequence is Antigen 1 (277 aa).

The first 16 residues, 1-16, serve as a signal peptide directing secretion; the sequence is MQLLALTLALCASIAA. N-linked (GlcNAc...) asparagine glycosylation is found at Asn41, Asn71, Asn127, and Asn200. Positions 230–277 are disordered; it reads CVGGEEENDGQGEEQTEEPAQDDQQDEAAEEEIPENCHTHEGGELHCT. Acidic residues predominate over residues 233–263; it reads GEEENDGQGEEQTEEPAQDDQQDEAAEEEIP. The span at 264–277 shows a compositional bias: basic and acidic residues; the sequence is ENCHTHEGGELHCT.

This sequence belongs to the ZPS1 family.

This chain is Antigen 1 (aspnd1), found in Emericella nidulans (strain FGSC A4 / ATCC 38163 / CBS 112.46 / NRRL 194 / M139) (Aspergillus nidulans).